The sequence spans 259 residues: Bisphosphoglycerate mutase (259 aa).

N-acetylserine is present on serine 2. Residues 10–17 (RHGEGAWN), 23–24 (CS), arginine 62, 89–92 (ERHY), arginine 100, and 116–117 (RR) contribute to the substrate site. The Tele-phosphohistidine intermediate role is filled by histidine 11. Residue glutamate 89 is the Proton donor/acceptor of the active site. Threonine 122 is subject to Phosphothreonine. 189–190 (GN) is a substrate binding site.

The protein belongs to the phosphoglycerate mutase family. BPG-dependent PGAM subfamily. Homodimer. In terms of tissue distribution, expressed in red blood cells.

The enzyme catalyses (2R)-3-phospho-glyceroyl phosphate = (2R)-2,3-bisphosphoglycerate + H(+). The catalysed reaction is (2R)-2-phosphoglycerate = (2R)-3-phosphoglycerate. At alkaline pH BPGM favors the synthase reaction; however, at lower pH the phosphatase reaction is dominant. Inhibited by citrate. Its function is as follows. Plays a major role in regulating hemoglobin oxygen affinity by controlling the levels of its allosteric effector 2,3-bisphosphoglycerate (2,3-BPG). Also exhibits mutase (EC 5.4.2.11) activity. This Oryctolagus cuniculus (Rabbit) protein is Bisphosphoglycerate mutase (BPGM).